The sequence spans 120 residues: NAD(P)H-quinone oxidoreductase subunit 3 (120 aa).

3 helical membrane-spanning segments follow: residues Tyr7 to Ala27, Met64 to Val84, and Leu89 to Val109.

This sequence belongs to the complex I subunit 3 family. NDH-1 can be composed of about 15 different subunits; different subcomplexes with different compositions have been identified which probably have different functions.

It localises to the cellular thylakoid membrane. It carries out the reaction a plastoquinone + NADH + (n+1) H(+)(in) = a plastoquinol + NAD(+) + n H(+)(out). The enzyme catalyses a plastoquinone + NADPH + (n+1) H(+)(in) = a plastoquinol + NADP(+) + n H(+)(out). Functionally, NDH-1 shuttles electrons from an unknown electron donor, via FMN and iron-sulfur (Fe-S) centers, to quinones in the respiratory and/or the photosynthetic chain. The immediate electron acceptor for the enzyme in this species is believed to be plastoquinone. Couples the redox reaction to proton translocation, and thus conserves the redox energy in a proton gradient. Cyanobacterial NDH-1 also plays a role in inorganic carbon-concentration. The chain is NAD(P)H-quinone oxidoreductase subunit 3 from Microcystis aeruginosa (strain NIES-843 / IAM M-2473).